Here is a 491-residue protein sequence, read N- to C-terminus: Cyclin-B1-5 (491 aa).

A Cyclin N-terminal domain is found at D275–Q347.

It belongs to the cyclin family. Cyclin AB subfamily. As to expression, expressed in roots, stems and flowers.

The sequence is that of Cyclin-B1-5 (CYCB1-5) from Arabidopsis thaliana (Mouse-ear cress).